The primary structure comprises 472 residues: UDP-N-acetylmuramate--L-alanine ligase (472 aa).

122–128 is an ATP binding site; it reads GSHGKTT.

The protein belongs to the MurCDEF family.

Its subcellular location is the cytoplasm. The catalysed reaction is UDP-N-acetyl-alpha-D-muramate + L-alanine + ATP = UDP-N-acetyl-alpha-D-muramoyl-L-alanine + ADP + phosphate + H(+). It participates in cell wall biogenesis; peptidoglycan biosynthesis. In terms of biological role, cell wall formation. This is UDP-N-acetylmuramate--L-alanine ligase from Myxococcus xanthus (strain DK1622).